The following is a 251-amino-acid chain: MASNENLPPNVIKQLAKELKSLDESPPDGIKVVVNDEDFSQICADIEGPVGTPYENGLFRMKLALSHDFPHSPPKGYFMTKIFHPNVASNGEICVNTLKKDWNPSLGLRHVLSVVRCLLIEPFPESALNEQAGKMLLENYDEYARHARLYTGIHAKPKPKFKTGAISESTTALNVGQTNNETPGAATAIPSSMTDIKRVTTSAQDQQHVANVVVAASASVVTTTQKREAGLAKVQADKKKVDARKKSLKRL.

Residues 10-156 (NVIKQLAKEL…ARLYTGIHAK (147 aa)) form the UBC core domain. Cys-94 functions as the Glycyl thioester intermediate in the catalytic mechanism. Positions 230–240 (GLAKVQADKKK) are enriched in basic and acidic residues. The disordered stretch occupies residues 230-251 (GLAKVQADKKKVDARKKSLKRL). Positions 230-251 (GLAKVQADKKKVDARKKSLKRL) form a coiled coil. The span at 241–251 (VDARKKSLKRL) shows a compositional bias: basic residues.

Belongs to the ubiquitin-conjugating enzyme family. In terms of processing, self-ubiquitinated. As to expression, expressed in seeds, pistils, siliques, hypocotyls and leaves.

The catalysed reaction is S-ubiquitinyl-[E1 ubiquitin-activating enzyme]-L-cysteine + [E2 ubiquitin-conjugating enzyme]-L-cysteine = [E1 ubiquitin-activating enzyme]-L-cysteine + S-ubiquitinyl-[E2 ubiquitin-conjugating enzyme]-L-cysteine.. Its pathway is protein modification; protein ubiquitination. In terms of biological role, accepts the ubiquitin from the E1 complex and catalyzes its covalent attachment to other proteins. The polypeptide is Ubiquitin-conjugating enzyme E2 22 (UBC22) (Arabidopsis thaliana (Mouse-ear cress)).